The following is a 511-amino-acid chain: ATP synthase subunit alpha (511 aa).

Residue 169-176 (GDRQTGKT) participates in ATP binding.

This sequence belongs to the ATPase alpha/beta chains family. In terms of assembly, F-type ATPases have 2 components, CF(1) - the catalytic core - and CF(0) - the membrane proton channel. CF(1) has five subunits: alpha(3), beta(3), gamma(1), delta(1), epsilon(1). CF(0) has three main subunits: a(1), b(2) and c(9-12). The alpha and beta chains form an alternating ring which encloses part of the gamma chain. CF(1) is attached to CF(0) by a central stalk formed by the gamma and epsilon chains, while a peripheral stalk is formed by the delta and b chains.

The protein localises to the cell inner membrane. The enzyme catalyses ATP + H2O + 4 H(+)(in) = ADP + phosphate + 5 H(+)(out). Its function is as follows. Produces ATP from ADP in the presence of a proton gradient across the membrane. The alpha chain is a regulatory subunit. This is ATP synthase subunit alpha from Paracoccus denitrificans (strain Pd 1222).